The following is a 150-amino-acid chain: Cytochrome c-type biogenesis protein CcmE (150 aa).

The Cytoplasmic segment spans residues 1-7; it reads MTRKQKR. Residues 8–28 traverse the membrane as a helical; Signal-anchor for type II membrane protein segment; that stretch reads LAIIGGGVAFLTAAVLLVMFA. Residues 29–150 are Periplasmic-facing; sequence FSQAVAYFYV…VTLGGEENIR (122 aa). Histidine 123 and tyrosine 127 together coordinate heme.

It belongs to the CcmE/CycJ family.

The protein resides in the cell inner membrane. Its function is as follows. Heme chaperone required for the biogenesis of c-type cytochromes. Transiently binds heme delivered by CcmC and transfers the heme to apo-cytochromes in a process facilitated by CcmF and CcmH. This chain is Cytochrome c-type biogenesis protein CcmE, found in Rhizobium meliloti (strain 1021) (Ensifer meliloti).